The sequence spans 141 residues: Large ribosomal subunit protein uL11 (141 aa).

It belongs to the universal ribosomal protein uL11 family. As to quaternary structure, part of the ribosomal stalk of the 50S ribosomal subunit. Interacts with L10 and the large rRNA to form the base of the stalk. L10 forms an elongated spine to which L12 dimers bind in a sequential fashion forming a multimeric L10(L12)X complex. One or more lysine residues are methylated.

Forms part of the ribosomal stalk which helps the ribosome interact with GTP-bound translation factors. The sequence is that of Large ribosomal subunit protein uL11 from Exiguobacterium sp. (strain ATCC BAA-1283 / AT1b).